The chain runs to 107 residues: Ig kappa chain V-VI region XRPC 24 (107 aa).

The segment at 1–23 (EIVLTQSPAITAASLGQKVTITC) is framework-1. A disulfide bridge links cysteine 23 with cysteine 87. A complementarity-determining-1 region spans residues 24–33 (SASSSVSYMH). Positions 34–48 (WYQQKSGTSPKPWIY) are framework-2. The complementarity-determining-2 stretch occupies residues 49-55 (EISKLAS). Residues 56–87 (GVPARFSGSGSGTSYSLTISSMEAEDAAIYYC) form a framework-3 region. Residues 88 to 96 (QQWNYPLIT) are complementarity-determining-3. The interval 97 to 106 (FGSGTKLEIK) is framework-4.

The chain is Ig kappa chain V-VI region XRPC 24 from Mus musculus (Mouse).